The following is a 666-amino-acid chain: SNARE-interacting protein KEULE (666 aa).

Residues 340-377 (KNKAAQLQGKRDGAELSTRDLQKMVQALPQYSEQIDKL) adopt a coiled-coil conformation. The tract at residues 534 to 589 (KEDFPCMNDPSPSFHGSTSLSSAASSSQGQAAQSMRSRRTPTWAKPRGSDDGYSSD) is disordered. The segment covering 550-568 (STSLSSAASSSQGQAAQSM) has biased composition (low complexity).

This sequence belongs to the STXBP/unc-18/SEC1 family. In terms of assembly, binds the syntaxin KNOLLE. Interacts with SEC6. In terms of tissue distribution, expressed throughout the plant, both in mitotically active and quiescent cells. Enriched in dividing tissues.

It localises to the cytoplasm. Its subcellular location is the membrane. It is found in the cytoskeleton. The protein localises to the phragmoplast. Its function is as follows. Regulator of vesicle trafficking involved in cytokinesis and root hair development, but not required for cell elongation. This is SNARE-interacting protein KEULE (KEU) from Arabidopsis thaliana (Mouse-ear cress).